A 289-amino-acid polypeptide reads, in one-letter code: Protease HtpX homolog (289 aa).

The next 2 membrane-spanning stretches (helical) occupy residues 11–31 (AALFGVLWAVLLGLGAIIAAG) and 34–54 (STTPIWIMALIGVATTAYGYW). H138 provides a ligand contact to Zn(2+). Residue E139 is part of the active site. Position 142 (H142) interacts with Zn(2+). The next 2 membrane-spanning stretches (helical) occupy residues 152–172 (SVVAAVAGVITSVGQMLLIFG) and 182–202 (LATIAMALLAPFAASLIQMAI). Residue E207 coordinates Zn(2+).

It belongs to the peptidase M48B family. Zn(2+) is required as a cofactor.

The protein resides in the cell membrane. This Paenarthrobacter aurescens (strain TC1) protein is Protease HtpX homolog.